Consider the following 206-residue polypeptide: Emopamil-binding protein-like (206 aa).

A run of 4 helical transmembrane segments spans residues 10–30 (EAGGSLLLCAALLAAGCALGL), 42–62 (GALIWLCYDALVHFALEGPFV), 101–121 (VEILTVALDGSLALFLIYAIV), and 165–185 (CWLYLFFFNGVWVLIPGLLLW). An EXPERA domain is found at 39–184 (ADRGALIWLC…VWVLIPGLLL (146 aa)).

It belongs to the EBP family. As to quaternary structure, homodimer. As to expression, widely expressed with highest levels in liver, lung and kidney.

It is found in the endoplasmic reticulum membrane. Functionally, does not possess sterol isomerase activity and does not bind sigma ligands. The sequence is that of Emopamil-binding protein-like (EBPL) from Homo sapiens (Human).